The following is a 461-amino-acid chain: MKKGYITQVIGPVVDIRFEGDLPPINNAIKIPMGDRELVVEVAQHIGDNTVRCVAMASTDGLRRGMECIDTGGPIMVPVGKGVLGRMFNVLGQPIDELGEVKDVKYMPIHKKPPSFEEQNPATEILETGIKVIDLLTPYPKGGKIGLFGGAGVGKTVLIMELIRNVAIEHGGYSIFAGVGERSREGNELWLEMHEAGVIDKTAFVFGQMNEPPGARMRVGLAGLTIAEYFRDEEHQDVLLFIDNIFRFVQAGSEVSALLGRMPSAVGYQPTLATEMGALQERITSTKKGSITSVQAIYVPADDLTDPAPATTFAHLDATTVLSRSIAEMGIYPAVDPLDSTSRILEPHIVGEEHYYVARKVQEILQRYKELQDIIAILGMEELTEEDRLIVYRARKIQRFLSQPFFVAEAFTGTPGKYVPLKETIRGFKKIVEGEMDDIPEPAFYMVGTIDEVYEKAEKMK.

149-156 (GGAGVGKT) provides a ligand contact to ATP.

Belongs to the ATPase alpha/beta chains family. As to quaternary structure, F-type ATPases have 2 components, CF(1) - the catalytic core - and CF(0) - the membrane proton channel. CF(1) has five subunits: alpha(3), beta(3), gamma(1), delta(1), epsilon(1). CF(0) has three main subunits: a(1), b(2) and c(9-12). The alpha and beta chains form an alternating ring which encloses part of the gamma chain. CF(1) is attached to CF(0) by a central stalk formed by the gamma and epsilon chains, while a peripheral stalk is formed by the delta and b chains.

The protein resides in the cell membrane. It carries out the reaction ATP + H2O + 4 H(+)(in) = ADP + phosphate + 5 H(+)(out). Functionally, produces ATP from ADP in the presence of a proton gradient across the membrane. The catalytic sites are hosted primarily by the beta subunits. This Caldanaerobacter subterraneus subsp. tengcongensis (strain DSM 15242 / JCM 11007 / NBRC 100824 / MB4) (Thermoanaerobacter tengcongensis) protein is ATP synthase subunit beta.